The sequence spans 558 residues: Formate--tetrahydrofolate ligase (558 aa).

Thr66 to Thr73 provides a ligand contact to ATP.

It belongs to the formate--tetrahydrofolate ligase family.

It catalyses the reaction (6S)-5,6,7,8-tetrahydrofolate + formate + ATP = (6R)-10-formyltetrahydrofolate + ADP + phosphate. The protein operates within one-carbon metabolism; tetrahydrofolate interconversion. The chain is Formate--tetrahydrofolate ligase from Neisseria meningitidis serogroup B (strain ATCC BAA-335 / MC58).